The sequence spans 261 residues: Carnitinyl-CoA dehydratase (261 aa).

The active-site Nucleophile is the Glu111. Glu131 functions as the Proton acceptor in the catalytic mechanism.

Belongs to the enoyl-CoA hydratase/isomerase family.

It catalyses the reaction (R)-carnitinyl-CoA = crotonobetainyl-CoA + H2O. It functions in the pathway amine and polyamine metabolism; carnitine metabolism. In terms of biological role, catalyzes the reversible dehydration of L-carnitinyl-CoA to crotonobetainyl-CoA. The protein is Carnitinyl-CoA dehydratase of Salmonella arizonae (strain ATCC BAA-731 / CDC346-86 / RSK2980).